Here is a 4545-residue protein sequence, read N- to C-terminus: Prolow-density lipoprotein receptor-related protein 1 (4545 aa).

A signal peptide spans M1–G19. Topologically, residues A20–S4424 are extracellular. LDL-receptor class A domains follow at residues T27–P66 and R72–R110. Intrachain disulfides connect C28–C41, C35–C54, C48–C65, C73–C86, C80–C99, and C93–C109. Residues N115, N137, N186, N240, and N275 are each glycosylated (N-linked (GlcNAc...) asparagine). LDL-receptor class B repeat units lie at residues G293 to M335, G336 to S379, and R380 to Y423. A glycan (N-linked (GlcNAc...) asparagine) is linked at N358. An N-linked (GlcNAc...) asparagine glycan is attached at N447. LDL-receptor class B repeat units lie at residues G572 to G614, D615 to N660, G661 to A711, and G712 to Y755. Residues T639 to D671 form an HAT 1 repeat. The N-linked (GlcNAc...) asparagine glycan is linked to N730. 8 LDL-receptor class A domains span residues Q854–H892, T895–S933, T936–A973, T976–S1013, S1015–T1053, G1062–E1099, V1104–E1142, and A1145–D1184. 24 cysteine pairs are disulfide-bonded: C855–C867, C862–C880, C874–C891, C896–C908, C903–C921, C915–C932, C937–C949, C944–C962, C956–C972, C977–C990, C985–C1003, C997–C1012, C1016–C1028, C1023–C1041, C1035–C1052, C1063–C1076, C1070–C1089, C1083–C1098, C1105–C1119, C1113–C1132, C1126–C1141, C1146–C1160, C1153–C1173, and C1167–C1183. Residues W872, D875, D877, D879, D885, and E886 each contribute to the Ca(2+) site. An N-linked (GlcNAc...) asparagine glycan is attached at N929. 6 residues coordinate Ca(2+): W1033, D1036, D1038, D1040, D1046, and E1047. Residue N1051 is glycosylated (N-linked (GlcNAc...) asparagine). W1081, D1084, D1086, D1088, D1094, and E1095 together coordinate Ca(2+). N1156 is a glycosylation site (N-linked (GlcNAc...) asparagine). Residues N1196 and N1219 are each glycosylated (N-linked (GlcNAc...) asparagine). LDL-receptor class B repeat units follow at residues S1310–A1356, G1357–D1399, G1400–E1446, K1447–E1491, and V1492–S1532. 2 HAT repeats span residues T1380–R1413 and M1470–A1503. N-linked (GlcNAc...) asparagine glycans are attached at residues N1512, N1559, N1576, N1617, and N1646. LDL-receptor class B repeat units lie at residues Q1628–S1670, R1671–R1714, G1715–E1754, and S1755–K1799. One copy of the HAT 4 repeat lies at V1653–Q1684. N1724, N1734, N1764, N1826, and N1934 each carry an N-linked (GlcNAc...) asparagine glycan. 4 LDL-receptor class B repeats span residues D1935 to A1977, G1978 to K2020, G2021 to G2064, and G2065 to F2108. N-linked (GlcNAc...) asparagine glycosylation occurs at N1996. Residue K2010 is modified to N6-acetyllysine. An N-linked (GlcNAc...) asparagine glycan is attached at N2049. N-linked (GlcNAc...) asparagine glycans are attached at residues N2118 and N2128. LDL-receptor class B repeat units follow at residues N2254 to W2295, D2296 to Q2344, N2345 to A2389, E2390 to H2432, and I2433 to D2474. HAT repeat units lie at residues T2277–T2309, T2325–S2358, and H2411–Q2444. N-linked (GlcNAc...) asparagine glycans are attached at residues N2473, N2503, and N2522. LDL-receptor class A domains are found at residues S2524–N2563, R2566–N2602, A2605–S2641, N2639–P2690, R2696–N2732, F2734–E2771, and T2774–L2814. 6 disulfides stabilise this stretch: C2525–C2538, C2533–C2551, C2545–C2562, C2567–C2579, C2574–C2592, and C2586–C2601. Residue N2602 is glycosylated (N-linked (GlcNAc...) asparagine). 15 disulfide bridges follow: C2606–C2618, C2613–C2631, C2625–C2640, C2640–C2667, C2645–C2680, C2674–C2689, C2697–C2709, C2704–C2722, C2716–C2731, C2735–C2747, C2742–C2760, C2754–C2770, C2775–C2788, C2782–C2801, and C2795–C2813. N-linked (GlcNAc...) asparagine glycosylation is found at N2621 and N2639. N-linked (GlcNAc...) asparagine glycosylation occurs at N2816. LDL-receptor class A domains are found at residues T2818–E2855, T2858–T2899, and K2904–H2941. Intrachain disulfides connect C2819-C2831, C2826-C2844, C2838-C2854, C2859-C2871, C2866-C2885, C2879-C2898, C2905-C2918, C2913-C2931, C2925-C2940, C2987-C2997, and C2993-C3006. Residue N2906 is glycosylated (N-linked (GlcNAc...) asparagine). Residues D2983–D3018 enclose the EGF-like 1; calcium-binding domain. N-linked (GlcNAc...) asparagine glycans are attached at residues N3049 and N3090. 5 LDL-receptor class B repeats span residues Q3070–G3114, G3115–N3157, G3158–T3201, E3202–Y3244, and V3245–L3285. HAT repeat units follow at residues E3128–I3171 and R3224–N3256. N-linked (GlcNAc...) asparagine glycosylation is found at N3265 and N3334. LDL-receptor class A domains lie at N3334 to P3371, K3374 to D3410, V3413 to P3450, T3453 to T3491, T3494 to D3533, T3536 to T3572, P3575 to T3611, R3613 to G3649, T3654 to T3692, Q3695 to E3733, and H3741 to S3778. 33 disulfides stabilise this stretch: C3335/C3347, C3342/C3360, C3354/C3370, C3375/C3387, C3382/C3400, C3394/C3409, C3414/C3427, C3421/C3440, C3434/C3449, C3454/C3467, C3461/C3480, C3474/C3490, C3495/C3508, C3502/C3521, C3515/C3532, C3537/C3549, C3544/C3562, C3556/C3571, C3576/C3588, C3583/C3601, C3595/C3610, C3614/C3626, C3621/C3639, C3633/C3648, C3655/C3667, C3662/C3680, C3674/C3691, C3696/C3710, C3704/C3723, C3717/C3732, C3742/C3755, C3750/C3768, and C3762/C3777. The N-linked (GlcNAc...) asparagine glycan is linked to N3489. A glycan (N-linked (GlcNAc...) asparagine) is linked at N3663. N-linked (GlcNAc...) asparagine glycans are attached at residues N3789 and N3840. An LDL-receptor class B 31 repeat occupies G3913–I3925. N-linked (GlcNAc...) asparagine glycosylation is present at N3954. LDL-receptor class B repeat units lie at residues G3971–R4013, G4014–N4057, and E4058–Y4102. The stretch at T3995–I4027 is one HAT 10 repeat. Residues N4076, N4126, and N4180 are each glycosylated (N-linked (GlcNAc...) asparagine). EGF-like domains lie at R4197–D4230, E4233–T4269, Q4270–D4302, and Q4305–E4341. Intrachain disulfides connect C4201–C4211, C4205–C4221, C4237–C4247, C4241–C4257, C4259–C4268, C4273–C4283, C4277–C4293, C4309–C4319, C4313–C4329, and C4331–C4340. N-linked (GlcNAc...) asparagine glycosylation occurs at N4280. N4365 is a glycosylation site (N-linked (GlcNAc...) asparagine). The region spanning L4376 to E4410 is the EGF-like 6 domain. Intrachain disulfides connect C4378–C4388, C4382–C4398, and C4400–C4409. Residues I4425 to Y4445 form a helical membrane-spanning segment. The Cytoplasmic portion of the chain corresponds to K4446–A4545. Positions K4446–A4545 are interaction with MAFB. A Phosphothreonine modification is found at T4461. Y4508 carries the phosphotyrosine modification. Phosphoserine occurs at positions 4518, 4521, and 4524.

The protein belongs to the LDLR family. As to quaternary structure, heterodimer of an 85-kDa membrane-bound carboxyl subunit and a non-covalently attached 515-kDa N-terminal subunit. Intracellular domain interacts with MAFB. Found in a complex with PID1/PCLI1, LRP1 and CUBNI. Interacts with SNX17, PID1/PCLI1, PDGF and CUBN. The intracellular domain interacts with SHC1, GULP1 and DAB1. Can weakly interact (via NPXY motif) with DAB2 (via PID domain); the interaction is enhanced by tyrosine phosphorylation of the NPXY motif. Interacts with MDK; promotes neuronal survival. Interacts with LRPAP1; this interaction is followed by rapid internalization. Interacts with uPA/PLAU and PAI1/SERPINE1, either individually or in complex with each other, leading to rapid endocytosis; this interaction is abolished in the presence of LRPAP1/RAP. Also interacts with tPA/PLAT alone or in complex with SERPINE1. Interacts with the urokinase receptor PLAUR; this interaction leads to PLAUR internalization and is impaired in the presence of SORL1. Interacts with PDGFB. Interacts with TAU/MAPT, leading to endocytosis; this interaction is reduced in the presence of LRPAP1/RAP. Interacts with IGFBP3. Interacts with ADGRG6. Post-translationally, cleaved into a 85 kDa membrane-spanning subunit (LRP-85) and a 515 kDa large extracellular domain (LRP-515) that remains non-covalently associated. Gamma-secretase-dependent cleavage of LRP-85 releases the intracellular domain from the membrane. Phosphorylated on serine and threonine residues. In terms of processing, phosphorylated on tyrosine residues upon stimulation with PDGF. Tyrosine phosphorylation promotes interaction with SHC1.

The protein localises to the cell membrane. The protein resides in the membrane. It is found in the coated pit. Its subcellular location is the golgi outpost. It localises to the cytoplasm. The protein localises to the cytoskeleton. The protein resides in the microtubule organizing center. It is found in the nucleus. Its function is as follows. Endocytic receptor involved in endocytosis and in phagocytosis of apoptotic cells. Required for early embryonic development. Involved in cellular lipid homeostasis. Involved in the plasma clearance of chylomicron remnants and activated LRPAP1 (alpha 2-macroglobulin), as well as the local metabolism of complexes between plasminogen activators and their endogenous inhibitors. Acts as an LRPAP1 alpha-2-macroglobulin receptor. Acts as a TAU/MAPT receptor and controls the endocytosis of TAU/MAPT as well as its subsequent spread. May modulate cellular events, such as APP metabolism, kinase-dependent intracellular signaling, neuronal calcium signaling as well as neurotransmission. Also acts as a receptor for IGFBP3 to mediate cell growth inhibition. The polypeptide is Prolow-density lipoprotein receptor-related protein 1 (Rattus norvegicus (Rat)).